The following is a 399-amino-acid chain: Accessory Sec system protein translocase subunit SecY2 (399 aa).

Helical transmembrane passes span 14 to 34 (ILFTCFILIVYIFGSNISIVG), 60 to 80 (LNVFSLGLGPWLTSLVIIMLL), 102 to 122 (IITIVFAIFQSYFVISTYIHN), 128 to 148 (SNIILLMLILVAGTMLLVWLA), 152 to 172 (ITYGICGPMPIVLTSLIKSLF), 184 to 204 (VLLLILVIVTLVIALLILLFI), 238 to 258 (ISIMISLSVYVLLNNMINLIA), 272 to 292 (FANPIGIMFYIVLQIVLSYLL), 335 to 355 (WTGAILVALILAVPLYSTLLV), and 362 to 382 (IYFSMQLIILVYISINIGETI).

This sequence belongs to the SecY/SEC61-alpha family. SecY2 subfamily. Component of the accessory SecA2/SecY2 protein translocase complex required to export cell wall proteins. May form heterotrimers with SecE and SecG subunits.

Its subcellular location is the cell membrane. Part of the accessory SecA2/SecY2 system specifically required for export of possible cell wall proteins. The central subunit of a protein translocation channel. The chain is Accessory Sec system protein translocase subunit SecY2 from Staphylococcus haemolyticus (strain JCSC1435).